The primary structure comprises 699 residues: DNA ligase (699 aa).

Positions 1-20 are disordered; that stretch reads MTVQKPIESLSPAQAKREHR. NAD(+)-binding positions include 43–47, 92–93, and Glu-126; these read DAEYD and SL. Lys-128 acts as the N6-AMP-lysine intermediate in catalysis. The NAD(+) site is built by Arg-149, Glu-185, Lys-301, and Lys-325. The Zn(2+) site is built by Cys-419, Cys-422, Cys-443, and Cys-449. One can recognise a BRCT domain in the interval 621–699; the sequence is AKESPVAGKT…EEDWLKLVGE (79 aa).

This sequence belongs to the NAD-dependent DNA ligase family. LigA subfamily. Mg(2+) serves as cofactor. Mn(2+) is required as a cofactor.

The enzyme catalyses NAD(+) + (deoxyribonucleotide)n-3'-hydroxyl + 5'-phospho-(deoxyribonucleotide)m = (deoxyribonucleotide)n+m + AMP + beta-nicotinamide D-nucleotide.. DNA ligase that catalyzes the formation of phosphodiester linkages between 5'-phosphoryl and 3'-hydroxyl groups in double-stranded DNA using NAD as a coenzyme and as the energy source for the reaction. It is essential for DNA replication and repair of damaged DNA. The sequence is that of DNA ligase from Beijerinckia indica subsp. indica (strain ATCC 9039 / DSM 1715 / NCIMB 8712).